Consider the following 144-residue polypeptide: 3-hydroxyacyl-[acyl-carrier-protein] dehydratase FabZ (144 aa).

The active site involves histidine 47.

It belongs to the thioester dehydratase family. FabZ subfamily.

The protein localises to the cytoplasm. The catalysed reaction is a (3R)-hydroxyacyl-[ACP] = a (2E)-enoyl-[ACP] + H2O. Involved in unsaturated fatty acids biosynthesis. Catalyzes the dehydration of short chain beta-hydroxyacyl-ACPs and long chain saturated and unsaturated beta-hydroxyacyl-ACPs. This is 3-hydroxyacyl-[acyl-carrier-protein] dehydratase FabZ from Nitrosomonas eutropha (strain DSM 101675 / C91 / Nm57).